A 267-amino-acid polypeptide reads, in one-letter code: Orotidine 5'-phosphate decarboxylase (267 aa).

Residues aspartate 37, 59–61, 91–100, tyrosine 217, and arginine 235 each bind substrate; these read KTH and DRKFADIGNT. Catalysis depends on lysine 93, which acts as the Proton donor.

Belongs to the OMP decarboxylase family.

It carries out the reaction orotidine 5'-phosphate + H(+) = UMP + CO2. Its pathway is pyrimidine metabolism; UMP biosynthesis via de novo pathway; UMP from orotate: step 2/2. This is Orotidine 5'-phosphate decarboxylase (URA3) from Eremothecium gossypii (strain ATCC 10895 / CBS 109.51 / FGSC 9923 / NRRL Y-1056) (Yeast).